The primary structure comprises 94 residues: ATP synthase subunit c (94 aa).

2 helical membrane-spanning segments follow: residues 15-35 and 58-78; these read IGVG…WGLI and FIFA…AMWF.

Belongs to the ATPase C chain family. In terms of assembly, F-type ATPases have 2 components, F(1) - the catalytic core - and F(0) - the membrane proton channel. F(1) has five subunits: alpha(3), beta(3), gamma(1), delta(1), epsilon(1). F(0) has three main subunits: a(1), b(2) and c(10-14). The alpha and beta chains form an alternating ring which encloses part of the gamma chain. F(1) is attached to F(0) by a central stalk formed by the gamma and epsilon chains, while a peripheral stalk is formed by the delta and b chains.

It is found in the cell inner membrane. Functionally, f(1)F(0) ATP synthase produces ATP from ADP in the presence of a proton or sodium gradient. F-type ATPases consist of two structural domains, F(1) containing the extramembraneous catalytic core and F(0) containing the membrane proton channel, linked together by a central stalk and a peripheral stalk. During catalysis, ATP synthesis in the catalytic domain of F(1) is coupled via a rotary mechanism of the central stalk subunits to proton translocation. Key component of the F(0) channel; it plays a direct role in translocation across the membrane. A homomeric c-ring of between 10-14 subunits forms the central stalk rotor element with the F(1) delta and epsilon subunits. The chain is ATP synthase subunit c from Hydrogenovibrio crunogenus (strain DSM 25203 / XCL-2) (Thiomicrospira crunogena).